Reading from the N-terminus, the 901-residue chain is Protein translocase subunit SecA (901 aa).

Residues glutamine 87, glycine 105–threonine 109, and aspartate 512 contribute to the ATP site. Residues cysteine 885, cysteine 887, cysteine 896, and histidine 897 each coordinate Zn(2+).

The protein belongs to the SecA family. As to quaternary structure, monomer and homodimer. Part of the essential Sec protein translocation apparatus which comprises SecA, SecYEG and auxiliary proteins SecDF-YajC and YidC. The cofactor is Zn(2+).

The protein resides in the cell inner membrane. Its subcellular location is the cytoplasm. The enzyme catalyses ATP + H2O + cellular proteinSide 1 = ADP + phosphate + cellular proteinSide 2.. In terms of biological role, part of the Sec protein translocase complex. Interacts with the SecYEG preprotein conducting channel. Has a central role in coupling the hydrolysis of ATP to the transfer of proteins into and across the cell membrane, serving both as a receptor for the preprotein-SecB complex and as an ATP-driven molecular motor driving the stepwise translocation of polypeptide chains across the membrane. This chain is Protein translocase subunit SecA, found in Salmonella agona (strain SL483).